The sequence spans 471 residues: Protoporphyrinogen oxidase (471 aa).

Residues 16-21 (GGGISG), 39-40 (ES), Ala47, 61-64 (GPNS), Val251, Trp408, and 446-448 (VGL) contribute to the FAD site.

This sequence belongs to the protoporphyrinogen/coproporphyrinogen oxidase family. Protoporphyrinogen oxidase subfamily. In terms of assembly, monomer. Homodimer. FAD serves as cofactor.

The protein resides in the cytoplasm. The protein localises to the cell membrane. It carries out the reaction protoporphyrinogen IX + 3 O2 = protoporphyrin IX + 3 H2O2. It participates in porphyrin-containing compound metabolism; protoporphyrin-IX biosynthesis; protoporphyrin-IX from protoporphyrinogen-IX: step 1/1. Strongly inhibited by acifluorfen. Functionally, catalyzes the 6-electron oxidation of protoporphyrinogen-IX to form protoporphyrin-IX. Does not oxidize coproporphyrinogen III. Involved in the classical protoporphyrin-dependent (PPD) heme b biosynthesis. This Myxococcus xanthus protein is Protoporphyrinogen oxidase.